A 126-amino-acid chain; its full sequence is Aspartate 1-decarboxylase (126 aa).

The active-site Schiff-base intermediate with substrate; via pyruvic acid is the Ser-25. Residue Ser-25 is modified to Pyruvic acid (Ser). Thr-57 provides a ligand contact to substrate. Residue Tyr-58 is the Proton donor of the active site. A substrate-binding site is contributed by 73–75 (GAA).

The protein belongs to the PanD family. Heterooctamer of four alpha and four beta subunits. Requires pyruvate as cofactor. In terms of processing, is synthesized initially as an inactive proenzyme, which is activated by self-cleavage at a specific serine bond to produce a beta-subunit with a hydroxyl group at its C-terminus and an alpha-subunit with a pyruvoyl group at its N-terminus.

It is found in the cytoplasm. It catalyses the reaction L-aspartate + H(+) = beta-alanine + CO2. The protein operates within cofactor biosynthesis; (R)-pantothenate biosynthesis; beta-alanine from L-aspartate: step 1/1. Its function is as follows. Catalyzes the pyruvoyl-dependent decarboxylation of aspartate to produce beta-alanine. The polypeptide is Aspartate 1-decarboxylase (Escherichia coli O6:K15:H31 (strain 536 / UPEC)).